A 341-amino-acid polypeptide reads, in one-letter code: L-threonine 3-dehydrogenase (341 aa).

A Zn(2+)-binding site is contributed by C38. Active-site charge relay system residues include T40 and H43. Zn(2+) contacts are provided by H63, E64, C93, C96, C99, and C107. NAD(+) is bound by residues I175, D195, R200, 262 to 264, and 286 to 287; these read LGI and IY.

It belongs to the zinc-containing alcohol dehydrogenase family. In terms of assembly, homotetramer. It depends on Zn(2+) as a cofactor.

Its subcellular location is the cytoplasm. It catalyses the reaction L-threonine + NAD(+) = (2S)-2-amino-3-oxobutanoate + NADH + H(+). It participates in amino-acid degradation; L-threonine degradation via oxydo-reductase pathway; glycine from L-threonine: step 1/2. In terms of biological role, catalyzes the NAD(+)-dependent oxidation of L-threonine to 2-amino-3-ketobutyrate. This chain is L-threonine 3-dehydrogenase, found in Shewanella baltica (strain OS185).